Reading from the N-terminus, the 250-residue chain is MIILITNDDGFGSEGIKLLKEIARNFAPEIWIVAPDTDRSGAARSLDYPVKQSIGIKQHSEREFSVSGTPADCVIIALNKVMNKKPDLILSGVNIGSNVGDDICYSGTIGAVMEGAARSIPSIALSQVYHDKIDWHNTKVFAPKVIAKLVKVGWPKNIVMSVNFPATEKVKGVEFAEQGEYNIDGDLTFTENSNGSFSLNWSREHSGSGSINKIKEGFITITPVKLDFTDYDTLNTMKNSCADEFSSIAD.

4 residues coordinate a divalent metal cation: Asp-8, Asp-9, Ser-40, and Asn-94.

It belongs to the SurE nucleotidase family. A divalent metal cation is required as a cofactor.

It localises to the cytoplasm. The enzyme catalyses a ribonucleoside 5'-phosphate + H2O = a ribonucleoside + phosphate. In terms of biological role, nucleotidase that shows phosphatase activity on nucleoside 5'-monophosphates. This Wolbachia sp. subsp. Drosophila simulans (strain wRi) protein is 5'-nucleotidase SurE.